A 358-amino-acid polypeptide reads, in one-letter code: Mannonate dehydratase (358 aa).

This sequence belongs to the mannonate dehydratase family. Requires Fe(2+) as cofactor. It depends on Mn(2+) as a cofactor.

It catalyses the reaction D-mannonate = 2-dehydro-3-deoxy-D-gluconate + H2O. It functions in the pathway carbohydrate metabolism; pentose and glucuronate interconversion. Functionally, catalyzes the dehydration of D-mannonate. This is Mannonate dehydratase from Shouchella clausii (strain KSM-K16) (Alkalihalobacillus clausii).